The primary structure comprises 336 residues: Phosphate acyltransferase (336 aa).

Belongs to the PlsX family. As to quaternary structure, homodimer. Probably interacts with PlsY.

The protein resides in the cytoplasm. It carries out the reaction a fatty acyl-[ACP] + phosphate = an acyl phosphate + holo-[ACP]. Its pathway is lipid metabolism; phospholipid metabolism. Its function is as follows. Catalyzes the reversible formation of acyl-phosphate (acyl-PO(4)) from acyl-[acyl-carrier-protein] (acyl-ACP). This enzyme utilizes acyl-ACP as fatty acyl donor, but not acyl-CoA. The polypeptide is Phosphate acyltransferase (Pseudomonas putida (strain GB-1)).